Reading from the N-terminus, the 181-residue chain is Peptide deformylase (181 aa).

2 residues coordinate Fe cation: Cys103 and His145. Glu146 is a catalytic residue. His149 serves as a coordination point for Fe cation.

It belongs to the polypeptide deformylase family. It depends on Fe(2+) as a cofactor.

It carries out the reaction N-terminal N-formyl-L-methionyl-[peptide] + H2O = N-terminal L-methionyl-[peptide] + formate. In terms of biological role, removes the formyl group from the N-terminal Met of newly synthesized proteins. Requires at least a dipeptide for an efficient rate of reaction. N-terminal L-methionine is a prerequisite for activity but the enzyme has broad specificity at other positions. The protein is Peptide deformylase of Orientia tsutsugamushi (strain Boryong) (Rickettsia tsutsugamushi).